An 833-amino-acid chain; its full sequence is MTDVKKESDGPEPYSSSAFDFTLLPDYNNDFINEDDFAEFAKALAAPDHLSPSTEDLTAPQPETGKFSANNDWKPIHQRVRRRKKSKAPPRRGKDETREGFVYVLLKWPLLVVVLGWLLFLSIAYVFTRLYIYLYEHMVTWRGTRQKLRRQLQNASSYEEWIKCAQQLDTHLGSDDWKKNPSYSYYDSKTIRKVHEQLVKLRQRAESDETGKSTEKHVDGQPRAVEDLRALLEACIKNNFCGFENPRLYSETYYGTKDAVQSFIEEAEASLAFLLNSSQLDAENKRALFKHLGSNFGRTALCLSGGATFAYYHFGVAKALLDAGVLPEIITGTSGGALVAALLCTRTDEELKKVLVPALAGRITACHEDTWTWMKRWYATGARFDSVDWAKKCAWMTRGTPDCVVWSAVLASAAVPGILNPVVLMKKNRDGTLSPYSFGHKWKDGSLRTDIPLKALNLHFNVRFSIVSQVNPHINIFFFSSRGSVGRPVTHRRGRGWRGGFIGSATEQYLKLDLNKWLKVLRHLELLPRPLGQDWSEIWLQRFSGTITIWPKSIPSDFFYILTDPTPQRLARMIHVGQQSAFPKLKFIANRAKLEHLIQQGRRQYRPRGIREDIQAVLSEDDLQGLLKRTKSKSPSEEAIYPLSGSESSSSADFSRPGSPITLPLGFTFTRKNKKGLADLRTDPKALTDTPNSPSLSARLTGWWNTKSPRDSHPSTPKDPSRSLSPFTHHDRPNSMFELRPPKEVRDLQARTHGRPQHRNSDFLEEIRRRSSAFVEGEGSDDEGRAGRYRRGDVDAGAQDAEVYGEPAEFGDNEGDGEEVQSAVGLGLEGKGL.

Disordered regions lie at residues 1 to 20 (MTDVKKESDGPEPYSSSAFD) and 49 to 71 (HLSPSTEDLTAPQPETGKFSANN). Residues 108 to 128 (WPLLVVVLGWLLFLSIAYVFT) form a helical membrane-spanning segment. Residues 301-457 (LCLSGGATFA…RTDIPLKALN (157 aa)) enclose the PNPLA domain. Residues 332–336 (GTSGG) carry the GXSXG motif. The Nucleophile role is filled by Ser-334. Residue Asp-444 is the Proton acceptor of the active site. Disordered stretches follow at residues 630-657 (TKSKSPSEEAIYPLSGSESSSSADFSRP) and 680-833 (LRTD…GKGL). Over residues 644-655 (SGSESSSSADFS) the composition is skewed to low complexity. Over residues 689–707 (DTPNSPSLSARLTGWWNTK) the composition is skewed to polar residues. Basic and acidic residues-rich tracts occupy residues 740-750 (RPPKEVRDLQA), 759-769 (RNSDFLEEIRR), and 782-794 (DEGRAGRYRRGDV). Residues 809 to 819 (EFGDNEGDGEE) are compositionally biased toward acidic residues.

It belongs to the PLPL family.

The protein resides in the membrane. In terms of biological role, probable lipid hydrolase. The polypeptide is Patatin-like phospholipase domain-containing protein SNOG_00918 (Phaeosphaeria nodorum (strain SN15 / ATCC MYA-4574 / FGSC 10173) (Glume blotch fungus)).